The primary structure comprises 201 residues: MEWVWALVLLAALGGGSAERDCRVSSFRVKENFDKARFSGLWYAIAKKDPEGLFLQDNIIAEFSVDEKGHMSATAKGRVRLLSNWEVCADMVGTFTDTEDPAKFKMKYWGVASFLQRGNDDHWIIDTDYDTFALQYSCRLQNLDGTCADSYSFVFSRDPNGLSPETRRLVRQRQEELCLERQYRWIEHNGYCQSRPSRNSL.

The first 18 residues, 1-18, serve as a signal peptide directing secretion; the sequence is MEWVWALVLLAALGGGSA. Cystine bridges form between Cys22-Cys178, Cys88-Cys192, and Cys138-Cys147. Gln116 provides a ligand contact to substrate. The residue at position 139 (Arg139) is an Omega-N-methylarginine.

It belongs to the calycin superfamily. Lipocalin family. As to quaternary structure, interacts with TTR. Interaction with TTR prevents its loss by filtration through the kidney glomeruli. Interacts with STRA6.

The protein localises to the secreted. In terms of biological role, retinol-binding protein that mediates retinol transport in blood plasma. Delivers retinol from the liver stores to the peripheral tissues. Transfers the bound all-trans retinol to STRA6, that then facilitates retinol transport across the cell membrane. This is Retinol-binding protein 4 (Rbp4) from Mus musculus (Mouse).